We begin with the raw amino-acid sequence, 313 residues long: Ribosomal RNA small subunit methyltransferase H (313 aa).

S-adenosyl-L-methionine contacts are provided by residues Gly-35–His-37, Asp-55, Phe-79, Asp-100, and Gln-107.

This sequence belongs to the methyltransferase superfamily. RsmH family.

The protein localises to the cytoplasm. The catalysed reaction is cytidine(1402) in 16S rRNA + S-adenosyl-L-methionine = N(4)-methylcytidine(1402) in 16S rRNA + S-adenosyl-L-homocysteine + H(+). In terms of biological role, specifically methylates the N4 position of cytidine in position 1402 (C1402) of 16S rRNA. This is Ribosomal RNA small subunit methyltransferase H from Burkholderia thailandensis (strain ATCC 700388 / DSM 13276 / CCUG 48851 / CIP 106301 / E264).